A 120-amino-acid chain; its full sequence is uncharacterized protein (120 aa).

The disordered stretch occupies residues 90–120 (SLASRGGHMTQSGQCHVSGSLLGRGHKSRGR).

This is an uncharacterized protein from Homo sapiens (Human).